The following is a 559-amino-acid chain: Actin-binding protein WASF1 (559 aa).

3 disordered regions span residues 169–202 (TEDK…DRRR), 307–400 (RPQS…SPPV), and 412–492 (VHPL…STLP). Residues 182–202 (KNLDRPHEPEKVPRAPHDRRR) are compositionally biased toward basic and acidic residues. Residues 322–332 (PTPPPPPPPLP) show a composition bias toward pro residues. The segment covering 333 to 346 (SALSTSSLRASMTS) has biased composition (low complexity). Residue arginine 341 is modified to Asymmetric dimethylarginine; alternate. Arginine 341 is modified (omega-N-methylarginine; alternate). 4 stretches are compositionally biased toward pro residues: residues 347 to 374 (TPPP…PPAP), 384 to 399 (PAPP…PSPP), 423 to 437 (LPPP…PPGI), and 458 to 477 (TPSP…PPSQ). At serine 489 the chain carries Phosphoserine. Residues 497-514 (ARSVLLEAIRKGIQLRKV) enclose the WH2 domain.

Belongs to the SCAR/WAVE family. Component of the WAVE1 complex composed of ABI2, CYFIP1 or CYFIP2, BRK1, NCKAP1 and WASF1/WAVE1. Within the complex, a heterodimer containing NCKAP1 and CYFIP1 interacts with a heterotrimer formed by WAVE1, ABI2 and BRK1. CYFIP2 binds to activated RAC1 which causes the complex to dissociate, releasing activated WASF1. The complex can also be activated by NCK1. Binds actin and the Arp2/3 complex. Interacts with BAIAP2. Interacts with SHANK3; the interaction mediates the association of SHANK3 with the WAVE1 complex. Interacts with ABI1 (via N-terminus). Interacts with SORBS2; this interaction greatly enhances phosphorylation by ABL1 and dephosphorylation by PTPN12 and might mediate partial to focal adhesion sites. In terms of tissue distribution, expressed in hippocampal neurons (at protein level).

The protein resides in the cytoplasm. The protein localises to the cytoskeleton. It is found in the synapse. Its subcellular location is the cell junction. It localises to the focal adhesion. In terms of biological role, downstream effector molecule involved in the transmission of signals from tyrosine kinase receptors and small GTPases to the actin cytoskeleton. Promotes formation of actin filaments. Part of the WAVE complex that regulates lamellipodia formation. The WAVE complex regulates actin filament reorganization via its interaction with the Arp2/3 complex. As component of the WAVE1 complex, required for BDNF-NTRK2 endocytic trafficking and signaling from early endosomes. Also involved in the regulation of mitochondrial dynamics. This Rattus norvegicus (Rat) protein is Actin-binding protein WASF1 (Wasf1).